We begin with the raw amino-acid sequence, 168 residues long: Troponin I, cardiac muscle (168 aa).

Over residues 128–147 (VRKDDAEKESREVGDWRKNV) the composition is skewed to basic and acidic residues. The interval 128–168 (VRKDDAEKESREVGDWRKNVDALSGMEGRKKKFEAPGGGQG) is disordered.

Belongs to the troponin I family. In terms of assembly, binds to actin and tropomyosin.

Troponin I is the inhibitory subunit of troponin, the thin filament regulatory complex which confers calcium-sensitivity to striated muscle actomyosin ATPase activity. This Gallus gallus (Chicken) protein is Troponin I, cardiac muscle (TNNI3).